The following is a 448-amino-acid chain: tRNA(Ile)-lysidine synthase (448 aa).

28 to 33 provides a ligand contact to ATP; the sequence is STGVDS.

This sequence belongs to the tRNA(Ile)-lysidine synthase family.

Its subcellular location is the cytoplasm. The catalysed reaction is cytidine(34) in tRNA(Ile2) + L-lysine + ATP = lysidine(34) in tRNA(Ile2) + AMP + diphosphate + H(+). Functionally, ligates lysine onto the cytidine present at position 34 of the AUA codon-specific tRNA(Ile) that contains the anticodon CAU, in an ATP-dependent manner. Cytidine is converted to lysidine, thus changing the amino acid specificity of the tRNA from methionine to isoleucine. This is tRNA(Ile)-lysidine synthase from Lactiplantibacillus plantarum (strain ATCC BAA-793 / NCIMB 8826 / WCFS1) (Lactobacillus plantarum).